Reading from the N-terminus, the 1131-residue chain is ATP-dependent helicase FUN30 (1131 aa).

The tract at residues 1-70 (MSGSHSNDED…HTSKPLPSGS (70 aa)) is disordered. Over residues 16 to 36 (PETSSPTKVASSSPLKPTSPT) the composition is skewed to polar residues. Residues 76–111 (VNLAREFPDFSQTLVQAVFKSNSFNLQSARERLTRL) are CUE-like region. A disordered region spans residues 114–141 (QRQNWTWNKNASPKKSETPPPVKKSLPL). Ser232 is subject to Phosphoserine. 2 disordered regions span residues 242-273 (KYGR…YTES) and 327-350 (NDKD…ANES). Residues 250–271 (NDEEEEESMMTDDDDASGDDYT) show a composition bias toward acidic residues. A Phosphoserine modification is found at Ser369. The disordered stretch occupies residues 400–533 (DLMNLGEDDD…GDDDDDDDDE (134 aa)). Residues 405 to 416 (GEDDDDDNDDGN) show a composition bias toward acidic residues. Residues 417–432 (NDNNNSNNNNTAGADA) show a composition bias toward low complexity. The segment covering 433-442 (TSKEKEDTKA) has biased composition (basic and acidic residues). Residue Ser451 is modified to Phosphoserine. A compositionally biased stretch (acidic residues) spans 480 to 533 (EDEDDDVDLEAIDDELPQSEHEDDDYEEEDEDYNDEEEDVEYDDGDDDDDDDDE). Residues 584 to 752 (NLLYQNKMSC…MSLLEFIMPN (169 aa)) form the Helicase ATP-binding domain. An ATP-binding site is contributed by 597 to 604 (DDMGLGKT). Residues 703–706 (DEGH) carry the DEGH box motif. The region spanning 953–1108 (ALKKLLKTII…EDKKSQDVLE (156 aa)) is the Helicase C-terminal domain.

This sequence belongs to the SNF2/RAD54 helicase family. In terms of assembly, homodimer.

Its subcellular location is the nucleus. The protein localises to the chromosome. The enzyme catalyses ATP + H2O = ADP + phosphate + H(+). Functionally, DNA helicase that possesses intrinsic ATP-dependent nucleosome-remodeling activity and is both required for DNA repair and heterochromatin organization. Promotes DNA end resection of double-strand breaks (DSBs) following DNA damage: probably acts by weakening histone DNA interactions in nucleosomes flanking DSBs, facilitating single-stranded DNA (ssDNA) production by the EXO1 and SGS1 machinery. Promotes gene silencing at heterochromatin by regulating the chromatin structure within or around silent loci. Also required for heterochromatin organization at centromeres. This Saccharomyces cerevisiae (strain ATCC 204508 / S288c) (Baker's yeast) protein is ATP-dependent helicase FUN30 (FUN30).